The primary structure comprises 948 residues: Puromycin-sensitive aminopeptidase (948 aa).

Residues glutamate 206 and 341–345 (GAMEN) contribute to the substrate site. Zn(2+) is bound at residue histidine 377. Catalysis depends on glutamate 378, which acts as the Proton acceptor. Residues histidine 381 and glutamate 400 each coordinate Zn(2+).

The protein belongs to the peptidase M1 family. Zn(2+) serves as cofactor. Expressed mainly in intestinal cells in the posterior part of the intestine and in amphid sensory neurons and nerve ring neurons. Expressed in neurons in the male tail. Expressed in mature spermatids (at protein level).

The protein resides in the cytoplasm. The protein localises to the cell cortex. Its subcellular location is the chromosome. It localises to the cytoskeleton. It is found in the spindle pole. The enzyme catalyses Release of an N-terminal amino acid, preferentially alanine, from a wide range of peptides, amides and arylamides.. Inhibited by chelating agent 1,10-phenanthroline, aminopeptidase inhibitors actinonin, amastatin, and leuhistin, and to a lesser extent by puromycin. Aminopeptidase. Required for the exit from meiosis, probably upstream of cyclin cyb-3. Involved in the establishment of the anterior-posterior polarity at the embryonic 1-cell stage by regulating the dynamics of sperm-donated centrosomes. Plays a role in oocyte maturation. Required for embryonic development. In Caenorhabditis elegans, this protein is Puromycin-sensitive aminopeptidase.